We begin with the raw amino-acid sequence, 63 residues long: Large ribosomal subunit protein uL29 (63 aa).

It belongs to the universal ribosomal protein uL29 family.

This chain is Large ribosomal subunit protein uL29, found in Bordetella petrii (strain ATCC BAA-461 / DSM 12804 / CCUG 43448).